Reading from the N-terminus, the 185-residue chain is MQSLENHFLIAMPSMQDPFFKRAVTYICEHNEDGAMGLVINQPINITVGELLDKIEIDNDKTQQAAQVSVYAGGPVKTDRGFVLHSPKHGYSASQALSSDIMITTSKDVLASLTTAQAPEQFIITLGYSGWEQGQLEQELLDNSWLIIKADPKIIFDTPVEKRWEKAVSMLGFDISQLSPEAGHA.

Belongs to the UPF0301 (AlgH) family.

This is UPF0301 protein PSHAa2600 from Pseudoalteromonas translucida (strain TAC 125).